A 996-amino-acid chain; its full sequence is KK-1 biosynthesis cluster protein D (996 aa).

Disordered stretches follow at residues H307 to D333, E425 to L449, A489 to A556, and S571 to S602. Composition is skewed to polar residues over residues P318–Q329 and N428–Q439. 2 stretches are compositionally biased toward basic and acidic residues: residues S440–L449 and R500–A527. Residues T572–R590 are compositionally biased toward polar residues.

It participates in secondary metabolite biosynthesis. Functionally, part of the gene cluster that mediates the biosynthesis of KK-1, a novel cyclic depsipeptide with 10 residues which is a promising active compound with high activity against many plant pathogens, especially Botrytis cinerea. The role of kk1D in KK-1 biosynthesis has still to be determined. The nonribosomal peptide synthetase (NRPS) kk1B catalyzes the elongation and cyclization of the decapeptide chain composed of 1 D-lactic acid residue (D-Lac), 1 pipecolic acid residue (Pip), 1 aspartic acid residue (Asp), 1 isoleucine residue (Ile), 1 glycine residue (Gly), 1 tyrosine residue (Tyr) and 4 valine residues (Val). The Asp, Ile and 3 Val residues are N-methylated by the 5 methyltransferase domains from the NRPS (found in modules 3, 5, 6, 7 and 9), whereas the Tyr residue is O-methylated by the cluster encoded O-methyltransferase kk1A. The thioesterase kk1J is likely to be involved in the corrective mechanism of peptide chain synthesis. The D-lactate dehydrogenase kk1H is involved in the synthesis of D-lactic acid from pyruvic acid, which is recognized by the A domain of the first kk1B module. The pyrroline-5-carboxylate reductase kk1I is involved in the synthesis of the L-pipecolic acid residue of KK-1 from delta-1-pyrroline-5-carboxylate (P5C), a metabolic intermediate of lysine. It is still unclear how kk1C and kk1D are involved in the production of KK-1. The protein is KK-1 biosynthesis cluster protein D of Curvularia clavata.